A 349-amino-acid polypeptide reads, in one-letter code: Variable large protein 19 (349 aa).

The first 18 residues, 1–18, serve as a signal peptide directing secretion; the sequence is MRKRISAIIMTLFMVLVS. The N-palmitoyl cysteine moiety is linked to residue C19. A lipid anchor (S-diacylglycerol cysteine) is attached at C19.

This sequence belongs to the variable large protein (Vlp) family. Gamma subfamily.

It localises to the cell outer membrane. Its function is as follows. The Vlp and Vsp proteins are antigenically distinct proteins, only one vlp or vsp gene is transcriptionally active at any one time. Switching between these genes is a mechanism of host immune response evasion. This is Variable large protein 19 from Borrelia hermsii.